The primary structure comprises 254 residues: Transcription factor bHLH51 (254 aa).

The region spanning 62-111 is the bHLH domain; sequence SLSRSHRLAEKRRRDRINSHLTALRKLVPNSDKLDKAALLATVIEQVKEL.

As to quaternary structure, homodimer. In terms of tissue distribution, expressed constitutively in roots, stems, and flowers.

The protein resides in the nucleus. This Arabidopsis thaliana (Mouse-ear cress) protein is Transcription factor bHLH51 (BHLH51).